Here is a 534-residue protein sequence, read N- to C-terminus: Dual specificity calcium/calmodulin-dependent 3',5'-cyclic nucleotide phosphodiesterase 1B (534 aa).

Positions 1–21 (MELSPRSPPEMLESDCPSPLE) are disordered. Phosphoserine occurs at positions 7 and 14. 2 calmodulin-binding regions span residues 27–47 (SKKMWIKLRSLLRYMVKQLEN) and 116–139 (EKPKFRSIVHAVQAGIFVERMFRR). The 358-residue stretch at 144 to 501 (VGPTYSTAVL…QKWKERAASG (358 aa)) folds into the PDEase domain. Catalysis depends on histidine 221, which acts as the Proton donor. Positions 225, 261, 262, and 368 each coordinate Zn(2+). Aspartate 262 lines the Mg(2+) pocket. Disordered stretches follow at residues 442-473 (VQPTGDDDSKSKNQPSFQWRQPSLDVEVGDPN) and 494-534 (WKER…GNLD). Residues 453 to 462 (KNQPSFQWRQ) are compositionally biased toward polar residues. A phosphoserine mark is found at serine 464 and serine 512.

Belongs to the cyclic nucleotide phosphodiesterase family. PDE1 subfamily. Homodimer. The cofactor is Zn(2+). Mg(2+) serves as cofactor. In terms of tissue distribution, expressed in central nervous system regions. Most abundant in basal ganglia. Also found in kidney papilla and adrenal medulla.

Its subcellular location is the cytoplasm. The protein resides in the cytosol. It catalyses the reaction a nucleoside 3',5'-cyclic phosphate + H2O = a nucleoside 5'-phosphate + H(+). The enzyme catalyses 3',5'-cyclic GMP + H2O = GMP + H(+). The catalysed reaction is 3',5'-cyclic AMP + H2O = AMP + H(+). Its activity is regulated as follows. Type I PDE are activated by the binding of calmodulin in the presence of Ca(2+). Functionally, cyclic nucleotide phosphodiesterase with a dual specificity for the second messengers cAMP and cGMP, which are key regulators of many important physiological processes. Has a preference for cGMP as a substrate. The protein is Dual specificity calcium/calmodulin-dependent 3',5'-cyclic nucleotide phosphodiesterase 1B of Bos taurus (Bovine).